The following is a 697-amino-acid chain: Elongation factor G (697 aa).

A tr-type G domain is found at 10–285 (AKTRNIGIMA…GVIDYLPSPL (276 aa)). Residues 19–26 (AHIDAGKT), 83–87 (DTPGH), and 137–140 (NKMD) contribute to the GTP site.

It belongs to the TRAFAC class translation factor GTPase superfamily. Classic translation factor GTPase family. EF-G/EF-2 subfamily.

It is found in the cytoplasm. Its function is as follows. Catalyzes the GTP-dependent ribosomal translocation step during translation elongation. During this step, the ribosome changes from the pre-translocational (PRE) to the post-translocational (POST) state as the newly formed A-site-bound peptidyl-tRNA and P-site-bound deacylated tRNA move to the P and E sites, respectively. Catalyzes the coordinated movement of the two tRNA molecules, the mRNA and conformational changes in the ribosome. This Lactobacillus helveticus (strain DPC 4571) protein is Elongation factor G.